The sequence spans 499 residues: MIESVMAVRLSTGFCSSTALLQYRTAPSSEEGGNCFHYASRRVFQPQRIHHIDGSGFLKYNSDYITRKHLRKNRTQATAEYVDSASDPEKQTGKSRYHPSEEIRASLPQNDGDSRLSPAETTRTIIEVNNKGTLMLTGSIGDGVHENILWPDIPYITDQNGNLYFQVKEDEDVMQSVTSENNYVQVIVGFDTMEMIKEMELMGLSDSDFETEDDESGDDDSEDTGEDEDEEEWVAILEDEDEDDDDDDDDDEDDDDSDSDESLGDWANLETMRSCHPMFFAKRMTEVASNDPVDWMDQPSAGLAIQGLLSHILVEDYSDIQKKLADSNSTTNGNKDAENLVDKLEDNSKAGGDESEIDSSQDEKARNVVAFYKLEMIRIQLITAQGDQTEVEVEDVRKAQPDAIAHASAEIISRLEESGDKITEALKSLCWRHNSIQAEEVKLIGIDSLGFDLRLCAGAKIESLRFAFSTRATSEENAEGQIRKLLFPKTNQSTQPKPK.

Disordered stretches follow at residues 76-118 (QATA…RLSP) and 208-268 (DFET…DWAN). Basic and acidic residues predominate over residues 87 to 104 (DPEKQTGKSRYHPSEEIR). Over residues 208–263 (DFETEDDESGDDDSEDTGEDEDEEEWVAILEDEDEDDDDDDDDDEDDDDSDSDESL) the composition is skewed to acidic residues. Ser355 bears the Phosphoserine mark. Positions 478–499 (AEGQIRKLLFPKTNQSTQPKPK) are disordered. Residues 489–499 (KTNQSTQPKPK) show a composition bias toward polar residues.

This is an uncharacterized protein from Arabidopsis thaliana (Mouse-ear cress).